The sequence spans 700 residues: Myotubularin-related protein 11 (700 aa).

A disordered region spans residues 1 to 39 (MWWGGRGQSFNIAPQKEEPEMGLSGPKSNPGNRMPEPSS). The Myotubularin phosphatase domain maps to 201–644 (LETLEDWETE…PQIRFWKRCY (444 aa)).

The protein belongs to the protein-tyrosine phosphatase family. Non-receptor class myotubularin subfamily.

This is Myotubularin-related protein 11 (Mtmr11) from Mus musculus (Mouse).